The sequence spans 102 residues: Small ribosomal subunit protein uS10 (102 aa).

The protein belongs to the universal ribosomal protein uS10 family. In terms of assembly, part of the 30S ribosomal subunit.

Involved in the binding of tRNA to the ribosomes. The polypeptide is Small ribosomal subunit protein uS10 (Streptomyces griseus subsp. griseus (strain JCM 4626 / CBS 651.72 / NBRC 13350 / KCC S-0626 / ISP 5235)).